The sequence spans 240 residues: uncharacterized protein (240 aa).

Residues 1-18 form the signal peptide; it reads MTRYTYLFILQIISCSFA. N127 is a glycosylation site (N-linked (GlcNAc...) asparagine). The helical transmembrane segment at 215-235 threads the bilayer; that stretch reads GFISSSQLPQFVYLIVFTIIG.

The protein localises to the membrane. This is an uncharacterized protein from Caenorhabditis elegans.